A 538-amino-acid chain; its full sequence is MSSPLASELSELAALRPGFRLSAPHARVAPRAATHARGRGRASHAGQPRLRSSCPGPSPGKRRVVPSGGAQPRVLPALSSRSHLFPMASHPQTRIQAYLEKNKIGPLFEELMTKLITETPDQPIPFLIDHLQSKQGNRGQLQRTLSGSAALWAESEKSESKGTRRDFRSYDKPWQLNAKKPKKSKSDLAVSNISPPSPDSKSLPRSVEHPKWNWRTKPQSRDFDELNHILQESKKLGKALENLSRSIAISDELDKETVTFNSSLLRPRVIGEWIGREENDADPLAAEMLQPPIPRSKNDQWESEDSGSSPAGSLKMEPKNKGLKQQQQQHKKLLAAMLSQDSFESIHSPTPSVTEEDIDNEDDAMELLEDLNDLRMEGVTTLVPSGSKFNQGRPTYPAEPQAKVTLNICSRCARLQGDNLEERTEESLPILHSPDEKIPDSFDSLPGTEEALMEEGDEFEKASKLTGPGEASSGVGHSLKNYMEEDESLKQLQVVHQPWILPSDTESEGVEAEQEKRSADLLLCVPCSSCPTLVYSGL.

4 disordered regions span residues 20-71, 151-211, 288-331, and 458-482; these read RLSA…GGAQ, LWAE…EHPK, MLQP…QQHK, and EFEKASKLTGPGEASSGVGHSLKNY. Basic and acidic residues predominate over residues 154 to 171; the sequence is ESEKSESKGTRRDFRSYD.

This is an uncharacterized protein from Homo sapiens (Human).